The following is a 127-amino-acid chain: Aspartate 1-decarboxylase (127 aa).

Ser25 acts as the Schiff-base intermediate with substrate; via pyruvic acid in catalysis. Ser25 carries the pyruvic acid (Ser) modification. Thr57 contacts substrate. The Proton donor role is filled by Tyr58. Gly73–Ala75 is a substrate binding site.

It belongs to the PanD family. In terms of assembly, heterooctamer of four alpha and four beta subunits. Pyruvate serves as cofactor. Post-translationally, is synthesized initially as an inactive proenzyme, which is activated by self-cleavage at a specific serine bond to produce a beta-subunit with a hydroxyl group at its C-terminus and an alpha-subunit with a pyruvoyl group at its N-terminus.

It is found in the cytoplasm. The catalysed reaction is L-aspartate + H(+) = beta-alanine + CO2. It functions in the pathway cofactor biosynthesis; (R)-pantothenate biosynthesis; beta-alanine from L-aspartate: step 1/1. Catalyzes the pyruvoyl-dependent decarboxylation of aspartate to produce beta-alanine. This Dechloromonas aromatica (strain RCB) protein is Aspartate 1-decarboxylase.